Consider the following 1005-residue polypeptide: Translocated actin-recruiting phosphoprotein (1005 aa).

Positions 1–10 (MTNSISGYQP) are enriched in polar residues. Disordered stretches follow at residues 1–36 (MTNSISGYQPTVTTSTSSTTSASGASGSLGASSVST), 73–155 (APNV…SNYD), 487–521 (INWGTQAGPSSEDDGISFSNETPGAGPAAAPSPTP), 542–626 (DTNV…DGPA), 671–749 (GSAQ…GPSG), and 792–847 (TGTS…TSLM). Low complexity-rich tracts occupy residues 11-36 (TVTTSTSSTTSASGASGSLGASSVST) and 73-121 (APNV…SSDH). Polar residues predominate over residues 130-154 (GSNSGDISNNYDDVGSNNGDISSNY). Composition is skewed to low complexity over residues 542–578 (DTNVNTTNTTPTTQSTDASTDTSDIDDINTNNQTDDI), 593–612 (GDISETESSSGDDSGSVSSS), 720–736 (SSSGDESGGVSSPSSES), and 831–846 (STTTLRTGTGATTTSL).

It belongs to the chlamydial CPn_0572/CT_456/TC_0741 family. Post-translationally, phosphorylated on a tyrosine on attachment to the host cell. Tyrosine phosphorylation is temporally and spatially associated with recruitment of actin to the site of chlamydial entry. Phosphorylated Tarp seems to remain cytoplasmically exposed on the inclusion membrane at one side of internalized elementary bodies for several hours after entry.

Its subcellular location is the secreted. Appears to initiate or participate in signaling events that regulate the actin recruitment, which ultimately leads to internalization. The protein is Translocated actin-recruiting phosphoprotein (tarP) of Chlamydia trachomatis serovar D (strain ATCC VR-885 / DSM 19411 / UW-3/Cx).